The sequence spans 172 residues: Ribosomally synthesized cyclic peptide phomopsin precursor phomA (172 aa).

The N-terminal stretch at 1–18 (MRFTPAIVIAAFCSLAVA) is a signal peptide. Propeptides lie at residues 19-35 (APAAKAIARSPSEAVED), 42-50 (KKRGEAVED), 57-65 (KKRGEAVED), 72-79 (KRGEAVED), 86-93 (KRGEAVED), 100-108 (KKRGEAVED), 115-122 (KRGEAVED), 129-137 (RKRGEAVED), 144-151 (KRGEAVED), 158-165 (KRGEAVED), and lysine 172.

Post-translationally, phomA is processed by several endopeptidases including kexin proteases as well as the cluster-specific S41 family peptidase phomP1 and the oligopeptidase phomG to produce 10 identical copies of the hexapeptide Tyr-Val-Ile-Pro-Ile-Asp, that is further modified to yield phomapsins. The timing and order of proteolysis of the phomA precursor and PTMs are still unknown. Two tyrosinase-like enzymes, phomQ1 and phomQ2, catalyze the chlorination and hydroxylation of Tyr, respectively. PhomYb, is proposed to be involved in the construction of the macrocyclic structure. The other 4 ustYa family proteins may be involved in PTMs that generate the unique structure of phomopsin A. PhomYa is required for the hydroxylation of C-beta of Tyr. PhomYc, phomYd, and phomYe are responsible for the biosynthesis of 2,3-dehydroisoleucine (dIle), 2,3-dehydroaspartic acid (dAsp), and 3,4-dehydroproline (dPro), respectively. While dIle formation by phomYc is indispensable for the installation of dAsp by phomYd, the order of the other PTMs have not been elucidated yet. Most of the biosynthetic enzymes likely have broad substrate specificity, and thus, there might be a metabolic grid from a precursor to phomopsin A. The enzyme(s) responsible for the biosynthesis of 3,4-dehydrovaline (dVal) have also not been identified yet. Finally, phomM acts as an S-adenosylmethionine-dependent alpha-N-methyltransferase that catalyzes two successive N-methylation reactions, converting N-desmethyl-phomopsin A to phomopsin A and phomopsin A further to an N,N-dimethylated congener called phomopsin E.

Its pathway is mycotoxin biosynthesis. Its function is as follows. Ribosomally synthesized cyclic peptide phomopsin precursor; part of the gene cluster that mediates the biosynthesis of the phomopsins, a group of hexapeptide mycotoxins which infects lupins and causes lupinosis disease in livestock. The phomA translated product contains a 10-fold repeated peptide embedding the hexapeptide Tyr-Val-Ile-Pro-Ile-Asp, that is converted into phomapsins. After being excised from the precursor peptide by kexin proteases, the core peptides are cyclized and modified post-translationally by enzymes encoded within the corresponding gene cluster. In Diaporthe leptostromiformis (Lupinosis disease fungus), this protein is Ribosomally synthesized cyclic peptide phomopsin precursor phomA.